We begin with the raw amino-acid sequence, 289 residues long: Esterase GA18864 (289 aa).

Low complexity predominate over residues 1–19 (MTNNDAAVEAPSSSRASSS). Residues 1–24 (MTNNDAAVEAPSSSRASSSKQQPK) are disordered. Residues Ser133, Asp191, and His218 each act as charge relay system in the active site. The interval 253 to 289 (VSFIESGAEDNDDDGDANDAEVAAATAAAGSDLDDSD) is disordered. Residues 259 to 271 (GAEDNDDDGDAND) are compositionally biased toward acidic residues. Residues 272–283 (AEVAAATAAAGS) are compositionally biased toward low complexity.

It belongs to the LovG family.

The polypeptide is Esterase GA18864 (Drosophila pseudoobscura pseudoobscura (Fruit fly)).